Reading from the N-terminus, the 580-residue chain is FAD-dependent monooxygenase yanF (580 aa).

Residues 1 to 21 (MSSSAECRPIGWGGWGPDPNT) are disordered. An FAD-binding PCMH-type domain is found at 150-322 (CRLNASCIVT…VEYDLTTNTG (173 aa)). Residue H187 is modified to Pros-8alpha-FAD histidine.

It belongs to the oxygen-dependent FAD-linked oxidoreductase family.

Its pathway is secondary metabolite biosynthesis; terpenoid biosynthesis. Functionally, FAD-dependent monooxygenase; part of the gene cluster that mediates the biosynthesis of yanuthone D, a fungal isoprenoid epoxycyclohexenone that acts as an antibiotic against fungi and bacteria. The first step of the pathway is the synthesis of 6-methylsalicylic acid (6-MSA) by the polyketide synthase yanA. 6-MSA is then converted to m-cresol by the decarboxylase yanB. The cytochrome P450 monooxygenase yanC then catalyzes the oxidation of m-cresol to toluquinol. Epoxidation of toluquinol is then performed by the short chain dehydrogenase yanD, with the help of yanE, and a further prenylated by yanG leads to 7-deacetoxyyanuthone A. The next step is the hydroxylation of C-22 of 7-deacetoxyyanuthone A by the cytochrome P450 monooxygenase yanH to yield 22-deacetylyanuthone A. O-Mevalon transferase yanI then attaches mevalon to the hydroxyl group of 22-deacetylyanuthone A to produce yanuthone E. Finally, the FAD-dependent monooxygenase yanF oxidizes the hydroxyl group at C15 of yanuthone E to form yanuthone D. Furthermore, several branching points in the pathway lead to the production of yanuthones F and G from 7-deacetoxyyanuthone A; yanuthones H and I from 22-deacetylyanuthone A; and yanuthone J from yanuthone E. The protein is FAD-dependent monooxygenase yanF of Aspergillus niger (strain ATCC 1015 / CBS 113.46 / FGSC A1144 / LSHB Ac4 / NCTC 3858a / NRRL 328 / USDA 3528.7).